Reading from the N-terminus, the 213-residue chain is Phycocyanobilin lyase subunit beta (213 aa).

Belongs to the CpcE/RpcE/PecE family. As to quaternary structure, cpcE and CpcF associate to form a lyase.

Required for the chromophorylation of the CpcA gene product. The sequence is that of Phycocyanobilin lyase subunit beta (cpcF) from Thermosynechococcus vestitus (strain NIES-2133 / IAM M-273 / BP-1).